Here is a 263-residue protein sequence, read N- to C-terminus: Outer membrane protein OmpK (263 aa).

A signal peptide spans 1–20; the sequence is MRKSLLALSLLAATSAPVLA.

This sequence belongs to the nucleoside-specific channel-forming outer membrane porin (Tsx) (TC 1.B.10) family.

It is found in the cell outer membrane. Functionally, serves as receptor for a broad-host-range vibriophage, KVP40. This is Outer membrane protein OmpK from Vibrio parahaemolyticus.